Consider the following 208-residue polypeptide: N-(5'-phosphoribosyl)anthranilate isomerase (208 aa).

Belongs to the TrpF family.

The enzyme catalyses N-(5-phospho-beta-D-ribosyl)anthranilate = 1-(2-carboxyphenylamino)-1-deoxy-D-ribulose 5-phosphate. It participates in amino-acid biosynthesis; L-tryptophan biosynthesis; L-tryptophan from chorismate: step 3/5. This is N-(5'-phosphoribosyl)anthranilate isomerase from Methanococcus vannielii (strain ATCC 35089 / DSM 1224 / JCM 13029 / OCM 148 / SB).